The following is a 37-amino-acid chain: MKVRASVRKICSRCVALKRHGVLIVLCSNPKHKQRQG.

Belongs to the bacterial ribosomal protein bL36 family.

The protein localises to the plastid. Its subcellular location is the chloroplast. In Cyanidium caldarium (Red alga), this protein is Large ribosomal subunit protein bL36c (rpl36).